We begin with the raw amino-acid sequence, 466 residues long: MLPRHSDPIVAIATAPGRGAVGIVRVSGKQIGALVQALCGRALKPREATYLPFRDAAGQAIDQGLALYFPAPHSYTGEDVLELQAHGGPVVLQLLLARCLEAAQGLLPRLRLAEPGEFTERAFLNDKIDLAQAEAIADLIDASTEAAARGASRSLSGDFSREIHTLRDALVHLRMLVEATLDFPEEEIDFLRKADASGQLSNLKRSLARVMQRASQGALLREGIKVVIAGQPNAGKSSLLNALAGAELAIVTPIAGTTRDKVQQTIQIEGVPLHVIDTAGLRESDDEVERIGIARAWDEIAGADAVLFLHDLTRWGSAQYQDDDAAIAHTLSNRLPAGVPVVDVWNKADAAPQAAAPAREGESQAVLLSARTGQGLDTLRRQLLQIAGWQSAAEGVYIARARHIEALRAVDAHLMEAAAQLESDGPALDLLAEELRLAQNALNTITGEFTSDDLLGVIFSSFCIGK.

(6S)-5-formyl-5,6,7,8-tetrahydrofolate-binding residues include Arg25, Glu82, and Lys127. The 166-residue stretch at 223–388 (GIKVVIAGQP…LRRQLLQIAG (166 aa)) folds into the TrmE-type G domain. Asn233 contributes to the K(+) binding site. GTP-binding positions include 233–238 (NAGKSS), 252–258 (TPIAGTT), 277–280 (DTAG), 346–349 (NKAD), and 369–371 (SAR). Ser237 provides a ligand contact to Mg(2+). K(+) contacts are provided by Thr252, Ile254, and Thr257. Thr258 lines the Mg(2+) pocket. Lys466 is a (6S)-5-formyl-5,6,7,8-tetrahydrofolate binding site.

Belongs to the TRAFAC class TrmE-Era-EngA-EngB-Septin-like GTPase superfamily. TrmE GTPase family. In terms of assembly, homodimer. Heterotetramer of two MnmE and two MnmG subunits. The cofactor is K(+).

It is found in the cytoplasm. In terms of biological role, exhibits a very high intrinsic GTPase hydrolysis rate. Involved in the addition of a carboxymethylaminomethyl (cmnm) group at the wobble position (U34) of certain tRNAs, forming tRNA-cmnm(5)s(2)U34. The protein is tRNA modification GTPase MnmE of Acidovorax sp. (strain JS42).